A 70-amino-acid polypeptide reads, in one-letter code: Small ribosomal subunit protein bS21 (70 aa).

It belongs to the bacterial ribosomal protein bS21 family.

This Nitrosospira multiformis (strain ATCC 25196 / NCIMB 11849 / C 71) protein is Small ribosomal subunit protein bS21.